The sequence spans 63 residues: Hirudin (63 aa).

Residues 1-3 are interaction with thrombin active site; the sequence is VVY. Disulfide bonds link Cys-6-Cys-14, Cys-16-Cys-28, and Cys-22-Cys-39. Residues 39-63 are disordered; sequence CVTGEGTPGPQSHNDGDFEEPEEYL. An O-linked (GalNAc...) threonine glycan is attached at Thr-45. The interaction with fibrinogen-binding exosite of thrombin stretch occupies residues 55–63; sequence DFEEPEEYL. Tyr-62 is subject to Sulfotyrosine.

This sequence belongs to the protease inhibitor I14 (hirudin) family.

It localises to the secreted. Its function is as follows. Hirudin is a potent thrombin-specific protease inhibitor. It forms a stable non-covalent complex with alpha-thrombin, thereby abolishing its ability to cleave fibrinogen. The sequence is that of Hirudin from Poecilobdella viridis (Indian freshwater leech).